The following is a 238-amino-acid chain: Ribonuclease PH (238 aa).

Phosphate-binding positions include Arg86 and 124 to 126; that span reads GTR.

This sequence belongs to the RNase PH family. In terms of assembly, homohexameric ring arranged as a trimer of dimers.

The enzyme catalyses tRNA(n+1) + phosphate = tRNA(n) + a ribonucleoside 5'-diphosphate. In terms of biological role, phosphorolytic 3'-5' exoribonuclease that plays an important role in tRNA 3'-end maturation. Removes nucleotide residues following the 3'-CCA terminus of tRNAs; can also add nucleotides to the ends of RNA molecules by using nucleoside diphosphates as substrates, but this may not be physiologically important. Probably plays a role in initiation of 16S rRNA degradation (leading to ribosome degradation) during starvation. The chain is Ribonuclease PH from Escherichia coli O6:K15:H31 (strain 536 / UPEC).